The chain runs to 226 residues: Large ribosomal subunit protein uL1 (226 aa).

Belongs to the universal ribosomal protein uL1 family. As to quaternary structure, part of the 50S ribosomal subunit.

Functionally, binds directly to 23S rRNA. The L1 stalk is quite mobile in the ribosome, and is involved in E site tRNA release. Protein L1 is also a translational repressor protein, it controls the translation of the L11 operon by binding to its mRNA. The sequence is that of Large ribosomal subunit protein uL1 from Borreliella burgdorferi (strain ZS7) (Borrelia burgdorferi).